The sequence spans 471 residues: Putative multidrug resistance protein MdtD (471 aa).

The Periplasmic portion of the chain corresponds to 1–11 (MTDLPDSTRWQ). The helical transmembrane segment at 12–32 (LWIVAFGFFMQSLDTTIVNTA) threads the bilayer. Residues 33-48 (LPSMAQSLGESPLHMH) are Cytoplasmic-facing. A helical membrane pass occupies residues 49–69 (MVIVSYVLTVAVMLPASGWLA). Over 70–76 (DKVGVRN) the chain is Periplasmic. A helical membrane pass occupies residues 77–97 (IFFTAIVLFTLGSLFCALSGT). Topologically, residues 98 to 101 (LNEL) are cytoplasmic. A helical membrane pass occupies residues 102-124 (LLARALQGVGGAMMVPVGRLTVM). At 125–137 (KIVPREQYMAAMT) the chain is on the periplasmic side. A helical membrane pass occupies residues 138–158 (FVTLPGQVGPLLGPALGGLLV). At 159 to 164 (EYASWH) the chain is on the cytoplasmic side. The helical transmembrane segment at 165–185 (WIFLINIPVGIIGAIATLMLM) threads the bilayer. Residues 186-196 (PNYTMQTRRFD) lie on the Periplasmic side of the membrane. A helical membrane pass occupies residues 197–217 (LSGFLLLAVGMAVLTLALDGS). The Cytoplasmic segment spans residues 218 to 224 (KGTGLSP). Residues 225-245 (LTIDGLVAVGVVALVLYLLHA) traverse the membrane as a helical segment. The Periplasmic segment spans residues 246-262 (RNNNRALFSLKLFRTRT). A helical membrane pass occupies residues 263–283 (FSLGLAGSFAGRIGSGMLPFM). Over 284-285 (TP) the chain is Cytoplasmic. Residues 286 to 306 (VFLQIGLGFSPFHAGLMMIPM) traverse the membrane as a helical segment. Topologically, residues 307–341 (VLGSMGMKRIVVQVVNRFGYRRVLVATTLGLSLVT) are periplasmic. The chain crosses the membrane as a helical span at residues 342–362 (LLFMTTALLGWYYVLPFVLFL). Residues 363–395 (QGMVNSTRFSSMNTLTLKDLPDNLASSGNSLLS) lie on the Cytoplasmic side of the membrane. Residues 396-416 (MIMQLSMSIGVTIAGLLLGLF) form a helical membrane-spanning segment. Topologically, residues 417–430 (GSQHVSVDSGTTQT) are periplasmic. The chain crosses the membrane as a helical span at residues 431-451 (VFMYTWLSMAFIIALPAFIFA). Over 452–471 (RVPNDTHQNVAISRRKRSAQ) the chain is Cytoplasmic.

It belongs to the major facilitator superfamily. TCR/Tet family.

The protein localises to the cell inner membrane. This is Putative multidrug resistance protein MdtD from Escherichia coli O8 (strain IAI1).